Here is a 663-residue protein sequence, read N- to C-terminus: Cytoplasmic dynein 1 intermediate chain (663 aa).

Positions 17 to 37 (LREEKDRRRREKEIKDMEEAA) are enriched in basic and acidic residues. Disordered stretches follow at residues 17–52 (LREE…DQRK) and 75–107 (SVNS…KKQP). Residues 75–85 (SVNSMTSDNSN) show a composition bias toward low complexity. Residues 86 to 99 (TQTPDASLQATVNG) show a composition bias toward polar residues. 7 WD repeats span residues 311–360 (SKNR…STPE), 364–404 (HCQS…RTPI), 413–454 (AHTH…QPQD), 463–503 (SKAI…SGVN), 508–553 (RHLG…PLYS), 556–596 (DNSD…EVPT), and 602–641 (AGAP…AQPS).

It belongs to the dynein intermediate chain family. In terms of assembly, homodimer. The cytoplasmic dynein 1 complex consists of two catalytic heavy chains (HCs) and a number of non-catalytic subunits presented by intermediate chains (ICs), light intermediate chains (LICs) and light chains (LCs). High levels of isoform 1b, isoform 1c, isoform 3a and isoform 4 accumulate in early egg chambers and at stage 9 become concentrated at the posterior of the oocyte. Isoform 5a and isoform 5b are highly expressed in adult head and to a lesser extent in adult torso. Isoform 1a, isoform 2a and isoform 2b are found in all tissues examined, including ovaries, midgut, torso and head.

It is found in the cytoplasm. The protein localises to the cytoskeleton. Its subcellular location is the lysosome membrane. It localises to the nucleus membrane. Functionally, acts as one of several non-catalytic accessory components of the cytoplasmic dynein 1 complex that are thought to be involved in linking dynein to cargos and to adapter proteins that regulate dynein function. Cytoplasmic dynein 1 acts as a motor for the intracellular retrograde motility of vesicles and organelles along microtubules. The intermediate chains mediate the help dynein bind to dynactin 150 kDa component. The polypeptide is Cytoplasmic dynein 1 intermediate chain (sw) (Drosophila melanogaster (Fruit fly)).